Reading from the N-terminus, the 654-residue chain is Protein fem-1 homolog A (654 aa).

ANK repeat units follow at residues Asp-2–Ile-31, Gly-40–Ala-70, Glu-82–Arg-111, Thr-115–Val-145, His-149–Arg-178, Lys-182–Arg-211, and Tyr-214–Gln-243. Ser-108 carries the phosphoserine modification. Residues His-241–Pro-265 are disordered. Residues Gly-253–Ser-263 are compositionally biased toward polar residues. 2 TPR repeats span residues Val-283 to Gly-317 and Ser-375 to Asn-408. ANK repeat units follow at residues Asn-519 to Ser-561 and Asp-565 to Ala-594. Ser-608 carries the phosphoserine modification.

This sequence belongs to the fem-1 family. Component of a CRL2 E3 ubiquitin-protein ligase complex, also named ECS (Elongin BC-CUL2/5-SOCS-box protein) complex, composed of CUL2, Elongin BC (ELOB and ELOC), RBX1 and substrate-specific adapter FEM1A. Interacts with PTGER4. Interacts with NFKB1; the interaction is direct. In terms of processing, phosphorylated; highly phosphorylated in myoblasts and myotubes. Phosphorylation at Ser-108 and Ser-608 promote PGE2-EP4-mediated inhibition of inflammation. Dephosphorylated by protein phosphatase 2A (PP2A).

It is found in the mitochondrion. The protein resides in the cytoplasm. Its pathway is protein modification; protein ubiquitination. Functionally, substrate-recognition component of a Cul2-RING (CRL2) E3 ubiquitin-protein ligase complex of the DesCEND (destruction via C-end degrons) pathway, which recognizes a C-degron located at the extreme C terminus of target proteins, leading to their ubiquitination and degradation. The C-degron recognized by the DesCEND pathway is usually a motif of less than ten residues and can be present in full-length proteins, truncated proteins or proteolytically cleaved forms. The CRL2(FEM1A) complex specifically recognizes proteins with an arginine at the C-terminus: recognizes and binds proteins ending with -Lys/Arg-Xaa-Arg and -Lys/Arg-Xaa-Xaa-Arg C-degrons, such as SIL1 or OR51B2, leading to their ubiquitination and degradation. Involved in PGE2-EP4-mediated inhibition of inflammation of macrophages via interaction with NFKB1 and PTGER4. Promotes inflammation in brain microglia through MAP2K4/MKK4-mediated signaling. The protein is Protein fem-1 homolog A of Rattus norvegicus (Rat).